We begin with the raw amino-acid sequence, 156 residues long: Arginine repressor (156 aa).

This sequence belongs to the ArgR family.

The protein resides in the cytoplasm. Its pathway is amino-acid biosynthesis; L-arginine biosynthesis [regulation]. Regulates arginine biosynthesis genes. This chain is Arginine repressor, found in Klebsiella pneumoniae (strain 342).